Here is a 363-residue protein sequence, read N- to C-terminus: Ethanolamine kinase 1 (363 aa).

Belongs to the choline/ethanolamine kinase family.

It is found in the cytoplasm. It catalyses the reaction ethanolamine + ATP = phosphoethanolamine + ADP + H(+). It participates in phospholipid metabolism; phosphatidylethanolamine biosynthesis; phosphatidylethanolamine from ethanolamine: step 1/3. Highly specific for ethanolamine phosphorylation. May be a rate-controlling step in phosphatidylethanolamine biosynthesis. This chain is Ethanolamine kinase 1 (Etnk1), found in Mus musculus (Mouse).